We begin with the raw amino-acid sequence, 423 residues long: Transducer protein Htr13 (423 aa).

Over residues 1-19 (MTGPDNSLTDPSASPSTPV) the composition is skewed to polar residues. The segment at 1 to 21 (MTGPDNSLTDPSASPSTPVAS) is disordered. The Methyl-accepting transducer domain maps to 152-388 (AVAELIERAR…ELTMMIDEAA (237 aa)).

This sequence belongs to the methyl-accepting chemotaxis (MCP) protein family. Post-translationally, methylated by CheR.

The protein localises to the cytoplasm. Potentially involved in chemo- or phototactic signal transduction. This is Transducer protein Htr13 (htr13) from Halobacterium salinarum (strain ATCC 29341 / DSM 671 / R1).